We begin with the raw amino-acid sequence, 288 residues long: Small ribosomal subunit protein uS3 (288 aa).

The 69-residue stretch at 39 to 107 (VREYLKAKLK…PVAVNIEEVR (69 aa)) folds into the KH type-2 domain. The interval 209–288 (GRNDLPAAET…AAAAADGKGE (80 aa)) is disordered. Basic and acidic residues predominate over residues 219 to 238 (PRPEEERRPRGPRRDGRPGD). Over residues 277-288 (APAAAAADGKGE) the composition is skewed to low complexity.

Belongs to the universal ribosomal protein uS3 family. As to quaternary structure, part of the 30S ribosomal subunit. Forms a tight complex with proteins S10 and S14.

In terms of biological role, binds the lower part of the 30S subunit head. Binds mRNA in the 70S ribosome, positioning it for translation. The polypeptide is Small ribosomal subunit protein uS3 (Acidovorax sp. (strain JS42)).